A 308-amino-acid polypeptide reads, in one-letter code: Ribonuclease Z (308 aa).

Residues His-61, His-63, Asp-65, His-66, His-139, Asp-210, and His-268 each contribute to the Zn(2+) site. Asp-65 serves as the catalytic Proton acceptor.

Belongs to the RNase Z family. In terms of assembly, homodimer. Zn(2+) is required as a cofactor.

The catalysed reaction is Endonucleolytic cleavage of RNA, removing extra 3' nucleotides from tRNA precursor, generating 3' termini of tRNAs. A 3'-hydroxy group is left at the tRNA terminus and a 5'-phosphoryl group is left at the trailer molecule.. Its function is as follows. Zinc phosphodiesterase, which displays some tRNA 3'-processing endonuclease activity. Probably involved in tRNA maturation, by removing a 3'-trailer from precursor tRNA. The protein is Ribonuclease Z of Halobacterium salinarum (strain ATCC 700922 / JCM 11081 / NRC-1) (Halobacterium halobium).